The primary structure comprises 66 residues: Delta-buthitoxin-Hj1a (66 aa).

In terms of domain architecture, LCN-type CS-alpha/beta spans 4–66 (RDAYIAQPHN…EPIKVPGKCH (63 aa)). Disulfide bonds link C14-C65, C18-C38, C24-C48, and C28-C50.

Belongs to the long (4 C-C) scorpion toxin superfamily. Sodium channel inhibitor family. Alpha subfamily. Expressed by the venom gland.

It localises to the secreted. Functionally, this recombinant toxin slows fast inactivation on Nav1.1/SCN1A (EC(50)=17 nM), Nav1.4/SN4A (EC(50)=7.5 nM), Nav1.5/SCN5A (EC(50)=9.2 nM) and Nav1.6/SCN8A (EC(50)=37.3 nM) voltage-gated sodium channels. On Nav1.1/SCN1A channel, it acts as an agonist by inducing a shift in both the voltage dependence of channel inactivation (alpha-toxin activity) and activation (beta-toxin activity). In vivo, shows moderate insecticidal activities. It induces irreversible paralysis in blowflies and lethal effects in D.melanogaster. This chain is Delta-buthitoxin-Hj1a, found in Hottentotta judaicus (Black scorpion).